A 255-amino-acid chain; its full sequence is 5-oxoprolinase subunit A (255 aa).

The protein belongs to the LamB/PxpA family. As to quaternary structure, forms a complex composed of PxpA, PxpB and PxpC.

It carries out the reaction 5-oxo-L-proline + ATP + 2 H2O = L-glutamate + ADP + phosphate + H(+). Functionally, catalyzes the cleavage of 5-oxoproline to form L-glutamate coupled to the hydrolysis of ATP to ADP and inorganic phosphate. In Pyrococcus abyssi (strain GE5 / Orsay), this protein is 5-oxoprolinase subunit A.